The following is a 268-amino-acid chain: Octanoyltransferase (268 aa).

A BPL/LPL catalytic domain is found at 49-237 (GTQGDVILVV…ALLKALSGEL (189 aa)). Residues 87 to 94 (RGGRITWH), 167 to 169 (ALG), and 180 to 182 (GLA) contribute to the substrate site. The active-site Acyl-thioester intermediate is cysteine 198.

The protein belongs to the LipB family.

The protein resides in the cytoplasm. It carries out the reaction octanoyl-[ACP] + L-lysyl-[protein] = N(6)-octanoyl-L-lysyl-[protein] + holo-[ACP] + H(+). It participates in protein modification; protein lipoylation via endogenous pathway; protein N(6)-(lipoyl)lysine from octanoyl-[acyl-carrier-protein]: step 1/2. Catalyzes the transfer of endogenously produced octanoic acid from octanoyl-acyl-carrier-protein onto the lipoyl domains of lipoate-dependent enzymes. Lipoyl-ACP can also act as a substrate although octanoyl-ACP is likely to be the physiological substrate. The polypeptide is Octanoyltransferase (Corynebacterium aurimucosum (strain ATCC 700975 / DSM 44827 / CIP 107346 / CN-1) (Corynebacterium nigricans)).